A 460-amino-acid chain; its full sequence is Bifunctional protein GlmU (460 aa).

Residues 1–232 (MALNVVILAA…AIEVEGANNR (232 aa)) form a pyrophosphorylase region. UDP-N-acetyl-alpha-D-glucosamine is bound by residues 8–11 (LAAG), K22, Q73, 78–79 (GT), 100–102 (YGD), G137, E157, N172, and N230. Position 102 (D102) interacts with Mg(2+). N230 lines the Mg(2+) pocket. The linker stretch occupies residues 233–253 (VQLAQLERAYQAREAEKLMLA). The N-acetyltransferase stretch occupies residues 254-460 (GANLRDPSRI…GWQRPVKIKK (207 aa)). UDP-N-acetyl-alpha-D-glucosamine-binding residues include R336 and K354. The active-site Proton acceptor is the H366. Residues Y369 and N380 each coordinate UDP-N-acetyl-alpha-D-glucosamine. Residues A383, 389–390 (NY), S408, A426, and R443 each bind acetyl-CoA.

This sequence in the N-terminal section; belongs to the N-acetylglucosamine-1-phosphate uridyltransferase family. The protein in the C-terminal section; belongs to the transferase hexapeptide repeat family. In terms of assembly, homotrimer. It depends on Mg(2+) as a cofactor.

The protein resides in the cytoplasm. It catalyses the reaction alpha-D-glucosamine 1-phosphate + acetyl-CoA = N-acetyl-alpha-D-glucosamine 1-phosphate + CoA + H(+). It carries out the reaction N-acetyl-alpha-D-glucosamine 1-phosphate + UTP + H(+) = UDP-N-acetyl-alpha-D-glucosamine + diphosphate. Its pathway is nucleotide-sugar biosynthesis; UDP-N-acetyl-alpha-D-glucosamine biosynthesis; N-acetyl-alpha-D-glucosamine 1-phosphate from alpha-D-glucosamine 6-phosphate (route II): step 2/2. The protein operates within nucleotide-sugar biosynthesis; UDP-N-acetyl-alpha-D-glucosamine biosynthesis; UDP-N-acetyl-alpha-D-glucosamine from N-acetyl-alpha-D-glucosamine 1-phosphate: step 1/1. It participates in bacterial outer membrane biogenesis; LPS lipid A biosynthesis. In terms of biological role, catalyzes the last two sequential reactions in the de novo biosynthetic pathway for UDP-N-acetylglucosamine (UDP-GlcNAc). The C-terminal domain catalyzes the transfer of acetyl group from acetyl coenzyme A to glucosamine-1-phosphate (GlcN-1-P) to produce N-acetylglucosamine-1-phosphate (GlcNAc-1-P), which is converted into UDP-GlcNAc by the transfer of uridine 5-monophosphate (from uridine 5-triphosphate), a reaction catalyzed by the N-terminal domain. The polypeptide is Bifunctional protein GlmU (Shewanella baltica (strain OS223)).